The following is a 146-amino-acid chain: Deoxyuridine 5'-triphosphate nucleotidohydrolase (146 aa).

Residues 66–68 (RSG), N79, 83–85 (TVD), and K93 contribute to the substrate site.

It belongs to the dUTPase family. It depends on Mg(2+) as a cofactor.

The enzyme catalyses dUTP + H2O = dUMP + diphosphate + H(+). It participates in pyrimidine metabolism; dUMP biosynthesis; dUMP from dCTP (dUTP route): step 2/2. Its function is as follows. This enzyme is involved in nucleotide metabolism: it produces dUMP, the immediate precursor of thymidine nucleotides and it decreases the intracellular concentration of dUTP so that uracil cannot be incorporated into DNA. The protein is Deoxyuridine 5'-triphosphate nucleotidohydrolase of Fusobacterium nucleatum subsp. nucleatum (strain ATCC 25586 / DSM 15643 / BCRC 10681 / CIP 101130 / JCM 8532 / KCTC 2640 / LMG 13131 / VPI 4355).